We begin with the raw amino-acid sequence, 315 residues long: 4-hydroxy-3-methylbut-2-enyl diphosphate reductase (315 aa).

C18 provides a ligand contact to [4Fe-4S] cluster. Positions 47 and 80 each coordinate (2E)-4-hydroxy-3-methylbut-2-enyl diphosphate. Dimethylallyl diphosphate-binding residues include H47 and H80. Residues H47 and H80 each coordinate isopentenyl diphosphate. [4Fe-4S] cluster is bound at residue C102. H130 contacts (2E)-4-hydroxy-3-methylbut-2-enyl diphosphate. Position 130 (H130) interacts with dimethylallyl diphosphate. Isopentenyl diphosphate is bound at residue H130. E132 acts as the Proton donor in catalysis. T171 contributes to the (2E)-4-hydroxy-3-methylbut-2-enyl diphosphate binding site. C201 serves as a coordination point for [4Fe-4S] cluster. (2E)-4-hydroxy-3-methylbut-2-enyl diphosphate-binding residues include S229, S230, N231, and S274. The dimethylallyl diphosphate site is built by S229, S230, N231, and S274. Isopentenyl diphosphate-binding residues include S229, S230, N231, and S274.

Belongs to the IspH family. [4Fe-4S] cluster is required as a cofactor.

The catalysed reaction is isopentenyl diphosphate + 2 oxidized [2Fe-2S]-[ferredoxin] + H2O = (2E)-4-hydroxy-3-methylbut-2-enyl diphosphate + 2 reduced [2Fe-2S]-[ferredoxin] + 2 H(+). It catalyses the reaction dimethylallyl diphosphate + 2 oxidized [2Fe-2S]-[ferredoxin] + H2O = (2E)-4-hydroxy-3-methylbut-2-enyl diphosphate + 2 reduced [2Fe-2S]-[ferredoxin] + 2 H(+). It functions in the pathway isoprenoid biosynthesis; dimethylallyl diphosphate biosynthesis; dimethylallyl diphosphate from (2E)-4-hydroxy-3-methylbutenyl diphosphate: step 1/1. It participates in isoprenoid biosynthesis; isopentenyl diphosphate biosynthesis via DXP pathway; isopentenyl diphosphate from 1-deoxy-D-xylulose 5-phosphate: step 6/6. Catalyzes the conversion of 1-hydroxy-2-methyl-2-(E)-butenyl 4-diphosphate (HMBPP) into a mixture of isopentenyl diphosphate (IPP) and dimethylallyl diphosphate (DMAPP). Acts in the terminal step of the DOXP/MEP pathway for isoprenoid precursor biosynthesis. This chain is 4-hydroxy-3-methylbut-2-enyl diphosphate reductase, found in Hyphomonas neptunium (strain ATCC 15444).